The sequence spans 273 residues: Manganese catalase (273 aa).

Glutamate 35 serves as a coordination point for Mn(2+). Residues aspartate 57 and aspartate 61 each contribute to the Ca(2+) site. The Mn(2+) site is built by glutamate 66, histidine 69, glutamate 149, and histidine 182. 3 residues coordinate Ca(2+): asparagine 220, serine 222, and glycine 224. Residues 254–273 form a disordered region; it reads EKPELKPAPPCVHNTLPGRE.

The protein belongs to the manganese catalase family. As to quaternary structure, homohexamer. It depends on Ca(2+) as a cofactor. Mn(2+) is required as a cofactor.

It carries out the reaction 2 H2O2 = O2 + 2 H2O. Its activity is regulated as follows. Inhibited in the presence of EDTA. Resistant to inhibition by sodium azide. Its function is as follows. Catalyzes the decomposition of hydrogen peroxide into water and oxygen. No significant activity could be detected with any of the other tested substrates, including glutathione, pyrogallol, NADH, NADPH and o-dianisidine. The sequence is that of Manganese catalase from Bacillus subtilis.